The primary structure comprises 946 residues: Rho GTPase-activating protein 4 (946 aa).

Positions 19-317 (TQVKEMRWQL…AVEALDPPGD (299 aa)) constitute an F-BAR domain. Residues 128-195 (LAQRLSHIAE…REAERQEEKR (68 aa)) adopt a coiled-coil conformation. A compositionally biased stretch (basic and acidic residues) spans 187-196 (EAERQEEKRA). Disordered regions lie at residues 187–220 (EAER…SLKK) and 402–435 (LDSF…QQQE). Low complexity-rich tracts occupy residues 202-211 (TTTAGATEAG) and 407-419 (TSPS…STSS). One can recognise a Rho-GAP domain in the interval 507–695 (GDMEKFIQSS…TLIVQPDRVF (189 aa)). Residues 746–805 (EGVVEAVACFAYTGRTAQELSFRRGDVLRLHERASSDWWRGEHNGMRGLIPHKYITLPAG) form the SH3 domain. A phosphoserine mark is found at S860, S901, and S906. Positions 885 to 946 (KTSVRQGLGP…QGLDTTPKPH (62 aa)) are disordered. The span at 901 to 910 (SPGPRSPKAP) shows a compositional bias: pro residues. A compositionally biased stretch (low complexity) spans 924-934 (GPGAPASPSAS).

In terms of assembly, interacts with NCKAP1L. Predominantly in hematopoietic cells (spleen, thymus and leukocytes); low levels in placenta, lung and various fetal tissues.

It is found in the cytoplasm. In terms of biological role, inhibitory effect on stress fiber organization. May down-regulate Rho-like GTPase in hematopoietic cells. In Homo sapiens (Human), this protein is Rho GTPase-activating protein 4.